The primary structure comprises 137 residues: L-ectoine synthase (137 aa).

The interval 118-137 is disordered; that stretch reads VHREDGSYAPADEADDQKPL.

It belongs to the ectoine synthase family.

The enzyme catalyses (2S)-4-acetamido-2-aminobutanoate = L-ectoine + H2O. The protein operates within amine and polyamine biosynthesis; ectoine biosynthesis; L-ectoine from L-aspartate 4-semialdehyde: step 3/3. With respect to regulation, seems to require potassium ions for its activity and stability. Slightly inhibited by N-ethylmaleimide. Functionally, catalyzes the circularization of gamma-N-acetyl-alpha,gamma-diaminobutyric acid (ADABA) to ectoine (1,4,5,6-tetrahydro-2-methyl-4-pyrimidine carboxylic acid), which is an excellent osmoprotectant. Does not act on N-acetylated amino acids like N-alpha-acetyl-L-asparagine,N-alpha-acetyl-L-ornithine, N-alpha-acetyl-L-lysine and N-epsilon-acetyl-L-lysine. The protein is L-ectoine synthase (ectC) of Halomonas elongata (strain ATCC 33173 / DSM 2581 / NBRC 15536 / NCIMB 2198 / 1H9).